The chain runs to 212 residues: Nucleoside triphosphate pyrophosphatase (212 aa).

The Proton acceptor role is filled by aspartate 79.

It belongs to the Maf family. It depends on a divalent metal cation as a cofactor.

The protein localises to the cytoplasm. The enzyme catalyses a ribonucleoside 5'-triphosphate + H2O = a ribonucleoside 5'-phosphate + diphosphate + H(+). It catalyses the reaction a 2'-deoxyribonucleoside 5'-triphosphate + H2O = a 2'-deoxyribonucleoside 5'-phosphate + diphosphate + H(+). Functionally, nucleoside triphosphate pyrophosphatase. May have a dual role in cell division arrest and in preventing the incorporation of modified nucleotides into cellular nucleic acids. This chain is Nucleoside triphosphate pyrophosphatase, found in Nocardia farcinica (strain IFM 10152).